Reading from the N-terminus, the 130-residue chain is Histone H2A.6 (130 aa).

Over residues 1–12 (MAGRGKTLGSGG) the composition is skewed to gly residues. The interval 1–23 (MAGRGKTLGSGGAKKATSRSSKA) is disordered.

This sequence belongs to the histone H2A family. In terms of assembly, the nucleosome is a histone octamer containing two molecules each of H2A, H2B, H3 and H4 assembled in one H3-H4 heterotetramer and two H2A-H2B heterodimers. The octamer wraps approximately 147 bp of DNA. Interacts with VIP1. In terms of processing, not ubiquitinated. In terms of tissue distribution, low level of expression, mainly in dividing tissues: floral buds, margins of newly emerging leaves, expanding leaves and the meristematic zone of root tips. Also expressed in many non-dividing cells of the elongation zone of the root.

It localises to the nucleus. The protein localises to the chromosome. Functionally, core component of nucleosome. Nucleosomes wrap and compact DNA into chromatin, limiting DNA accessibility to the cellular machineries which require DNA as a template. Histones thereby play a central role in transcription regulation, DNA repair, DNA replication and chromosomal stability. DNA accessibility is regulated via a complex set of post-translational modifications of histones, also called histone code, and nucleosome remodeling. Required for the T-DNA integration step of plant transformation by Agrobacterium. May play an important role in illegitimate recombination. This Arabidopsis thaliana (Mouse-ear cress) protein is Histone H2A.6 (RAT5).